Here is a 335-residue protein sequence, read N- to C-terminus: MLRLSLLRSTATLPVKCQRRGLILPAAAMYTLGSLIFGKEARLADAMERGELHNKNVDYAKEAEERTELRIRALANTRPMEPRYNGHVPLHRYEKLLLFAISGWNSFFHPEDGYNIVQLGEATALPVFLENLKQTMLSDSSGRRILKEQPNITTEILHMDKLAKLPHNTFGYVYYQWLKRENVSPDTRAPVKFIDDPMHAYIFKRYRQCHDFYHAITNMPIIIEGEITIKALEGANLGVPMAILGGILAPLRLKKVQRKRLYNIYLPWAVRTGLSCKPLINVYWEEMLEKDVTALRKELKITLPPDLRTMRKERAALRKEIDAKYNSQKRATTPA.

The transit peptide at 1–10 (MLRLSLLRST) directs the protein to the mitochondrion. Residues His210, Asp211, His214, and Glu226 each coordinate Zn(2+).

It belongs to the COQ4 family. As to quaternary structure, component of a multi-subunit COQ enzyme complex, composed of at least COQ3, COQ4, COQ5, COQ6, COQ7 and COQ9. Interacts with COQ3. Requires Zn(2+) as cofactor.

It is found in the mitochondrion inner membrane. It catalyses the reaction 4-hydroxy-3-methoxy-5-(all-trans-hexaprenyl)benzoate + H(+) = 2-methoxy-6-(all-trans-hexaprenyl)phenol + CO2. The protein operates within cofactor biosynthesis; ubiquinone biosynthesis. Lyase that catalyzes the C1-decarboxylation of 4-hydroxy-3-methoxy-5-(all-trans-hexaprenyl)benzoic acid into 2-methoxy-6-(all-trans-hexaprenyl)phenol during ubiquinone biosynthesis. May play a role in organizing a multi-subunit COQ enzyme complex required for coenzyme Q biosynthesis. Required for steady-state levels of COQ3, COQ4, COQ6, COQ7 and COQ9 polypeptides. The sequence is that of Ubiquinone biosynthesis protein COQ4, mitochondrial from Saccharomyces cerevisiae (strain ATCC 204508 / S288c) (Baker's yeast).